Reading from the N-terminus, the 484-residue chain is Chromosomal replication initiator protein DnaA (484 aa).

Residues 1–83 (MQPPSQDWAS…LAWRTVWPGI (83 aa)) form a domain I, interacts with DnaA modulators region. The segment at 83–146 (IAEVKVSVRN…EKKAEGEDQN (64 aa)) is domain II. Positions 110-146 (GDQPRPLPKKPAKKKQSVPATPKSTSPEKKAEGEDQN) are disordered. Residues 116-125 (LPKKPAKKKQ) are compositionally biased toward basic residues. Basic and acidic residues predominate over residues 135-146 (SPEKKAEGEDQN). The tract at residues 147 to 364 (QFEERYNFDN…GALNRVVAYA (218 aa)) is domain III, AAA+ region. 4 residues coordinate ATP: Gly-191, Gly-193, Lys-194, and Thr-195. The tract at residues 365-484 (TLSNRPINMD…VRLLMRQFEG (120 aa)) is domain IV, binds dsDNA.

This sequence belongs to the DnaA family. As to quaternary structure, oligomerizes as a right-handed, spiral filament on DNA at oriC.

The protein localises to the cytoplasm. Plays an essential role in the initiation and regulation of chromosomal replication. ATP-DnaA binds to the origin of replication (oriC) to initiate formation of the DNA replication initiation complex once per cell cycle. Binds the DnaA box (a 9 base pair repeat at the origin) and separates the double-stranded (ds)DNA. Forms a right-handed helical filament on oriC DNA; dsDNA binds to the exterior of the filament while single-stranded (ss)DNA is stabiized in the filament's interior. The ATP-DnaA-oriC complex binds and stabilizes one strand of the AT-rich DNA unwinding element (DUE), permitting loading of DNA polymerase. After initiation quickly degrades to an ADP-DnaA complex that is not apt for DNA replication. Binds acidic phospholipids. In Zymomonas mobilis subsp. mobilis (strain ATCC 31821 / ZM4 / CP4), this protein is Chromosomal replication initiator protein DnaA.